The chain runs to 382 residues: MSLKEKTQSLFANAFGYPATHTIQAPGRVNLIGEHTDYNDGFVLPCAIDYQTVISCAPRDDRKVRVMAADYENQLDEFSLDTPIIAHENYQWANYVRGVVKHLQLRNNSFGGVDMVISGNVPQGAGLSSSASLEVAVGTVLQQLYHLPLDGAQIALNGQEAENQFVGCNCGIMDQLISALGKKDHALLIDCRSLGTKAVSMPKGVAVVIINSNFKRTLVGSEYNTRREQCETGARFFQQPALRDVTIEEFNAVAHELDPIVAKRVRHILTENARTVEAASALEQGDLKRMGELMAESHASMRDDFEITVPQIDTLVEIVKAVIGDKGGVRMTGGGFGGCIVALIPEELVPAVQQAVAEQYEAKTGIKETFYVCKPSQGAGQC.

Position 34 to 37 (34 to 37) interacts with substrate; it reads EHTD. 124–130 lines the ATP pocket; it reads GAGLSSS. Residues S130 and E162 each contribute to the Mg(2+) site. D174 serves as the catalytic Proton acceptor. Residue Y223 participates in substrate binding.

Belongs to the GHMP kinase family. GalK subfamily.

It is found in the cytoplasm. It carries out the reaction alpha-D-galactose + ATP = alpha-D-galactose 1-phosphate + ADP + H(+). It functions in the pathway carbohydrate metabolism; galactose metabolism. Functionally, catalyzes the transfer of the gamma-phosphate of ATP to D-galactose to form alpha-D-galactose-1-phosphate (Gal-1-P). This Escherichia coli O81 (strain ED1a) protein is Galactokinase.